A 280-amino-acid chain; its full sequence is Small ribosomal subunit protein uS3 (280 aa).

The region spanning 38–106 is the KH type-2 domain; it reads IRRLLSTGLE…QVQLNILEVR (69 aa). Residues 215 to 280 are disordered; sequence AAAAPAGAER…PAAEPQSTES (66 aa). The span at 238–280 shows a compositional bias: low complexity; sequence SGASGTTATGTEAGRAAASADESTAAGQPAEAAPAAEPQSTES.

This sequence belongs to the universal ribosomal protein uS3 family. As to quaternary structure, part of the 30S ribosomal subunit. Forms a tight complex with proteins S10 and S14.

Its function is as follows. Binds the lower part of the 30S subunit head. Binds mRNA in the 70S ribosome, positioning it for translation. The sequence is that of Small ribosomal subunit protein uS3 from Mycobacterium avium (strain 104).